The sequence spans 554 residues: MPTVDDILEQVGESGWFQKQAFLILCLLSAAFAPICVGIVFLGFTPDHHCQSPGVAELSQRCGWSPAEELNYTVPGLGPAGEAFLGQCRRYEVDWNQSALSCVDPLASLATNRSHLPLGPCQDGWVYDTPGSSIVTEFNLVCADSWKLDLFQSCLNAGFLFGSLGVGYFADRFGRKLCLLGTVLVNAVSGVLMAFSPNYMSMLLFRLLQGLVSKGNWMAGYTLITEFVGSGSRRTVAIMYQMAFTVGLVALTGLAYALPHWRWLQLAVSLPTFLFLLYYWCVPESPRWLLSQKRNTEAIKIMDHIAQKNGKLPPADLKMLSLEEDVTEKLSPSFADLFRTPRLRKRTFILMYLWFTDSVLYQGLILHMGATSGNLYLDFLYSALVEIPGAFIALITIDRVGRIYPMAMSNLLAGAACLVMIFISPDLHWLNIIIMCVGRMGITIAIQMICLVNAELYPTFVRNLGVMVCSSLCDIGGIITPFIVFRLREVWQALPLILFAVLGLLAAGVTLLLPETKGVALPETMKDAENLGRKAKPKENTIYLKVQTSEPSGT.

Residues 1-21 (MPTVDDILEQVGESGWFQKQA) lie on the Cytoplasmic side of the membrane. A helical transmembrane segment spans residues 22 to 42 (FLILCLLSAAFAPICVGIVFL). Residues 43–149 (GFTPDHHCQS…LVCADSWKLD (107 aa)) lie on the Extracellular side of the membrane. Asn-71 carries N-linked (GlcNAc...) asparagine glycosylation. A helical membrane pass occupies residues 150-170 (LFQSCLNAGFLFGSLGVGYFA). Over 171-176 (DRFGRK) the chain is Cytoplasmic. The helical transmembrane segment at 177–197 (LCLLGTVLVNAVSGVLMAFSP) threads the bilayer. Residues 198-206 (NYMSMLLFR) lie on the Extracellular side of the membrane. The helical transmembrane segment at 207-229 (LLQGLVSKGNWMAGYTLITEFVG) threads the bilayer. At 230–235 (SGSRRT) the chain is on the cytoplasmic side. The helical transmembrane segment at 236–256 (VAIMYQMAFTVGLVALTGLAY) threads the bilayer. Residues 257-262 (ALPHWR) lie on the Extracellular side of the membrane. Residues 263 to 283 (WLQLAVSLPTFLFLLYYWCVP) traverse the membrane as a helical segment. A Proline-rich sequence motif is present at residues 283-287 (PESPR). Topologically, residues 284 to 347 (ESPRWLLSQK…FRTPRLRKRT (64 aa)) are cytoplasmic. Residue Ser-333 is modified to Phosphoserine. Residues 348–368 (FILMYLWFTDSVLYQGLILHM) form a helical membrane-spanning segment. The Extracellular segment spans residues 369 to 376 (GATSGNLY). A helical transmembrane segment spans residues 377–397 (LDFLYSALVEIPGAFIALITI). The Cytoplasmic portion of the chain corresponds to 398-402 (DRVGR). A helical transmembrane segment spans residues 403-423 (IYPMAMSNLLAGAACLVMIFI). At 424 to 431 (SPDLHWLN) the chain is on the extracellular side. A helical membrane pass occupies residues 432–452 (IIIMCVGRMGITIAIQMICLV). Residues 453–464 (NAELYPTFVRNL) lie on the Cytoplasmic side of the membrane. The chain crosses the membrane as a helical span at residues 465–485 (GVMVCSSLCDIGGIITPFIVF). Residues 486–492 (RLREVWQ) lie on the Extracellular side of the membrane. A helical membrane pass occupies residues 493–513 (ALPLILFAVLGLLAAGVTLLL). Topologically, residues 514 to 554 (PETKGVALPETMKDAENLGRKAKPKENTIYLKVQTSEPSGT) are cytoplasmic. Thr-541 is subject to Phosphothreonine.

Belongs to the major facilitator (TC 2.A.1) superfamily. Organic cation transporter (TC 2.A.1.19) family. Post-translationally, phosphorylated. As to expression, widely expressed with high level in liver. In liver, expressed around the central vein. Expressed in kidney. Expressed in small intestine enterocytes. Localized to peritubular myoid cells, Leydig cells and moderately to the basal membrane of Sertoli cells in testes. Expressed in tracheal and bronchial ciliated epithelium in the respiratory tract. Also expressed in skeletal muscle, stomach, spleen, heart, placentacolon, brain, granulycytes and lympohocytes. In terms of tissue distribution, expressed in liver and in glial cell lines. Expressed in glial cell lines. Not expressed in liver.

It localises to the basolateral cell membrane. Its subcellular location is the apical cell membrane. The protein resides in the lateral cell membrane. It is found in the basal cell membrane. The protein localises to the cell membrane. It carries out the reaction 1-methylnicotinamide(out) = 1-methylnicotinamide(in). It catalyses the reaction dopamine(out) = dopamine(in). The catalysed reaction is serotonin(out) = serotonin(in). The enzyme catalyses (R)-adrenaline(out) = (R)-adrenaline(in). It carries out the reaction histamine(out) = histamine(in). It catalyses the reaction guanidine(out) = guanidine(in). The catalysed reaction is acetylcholine(in) = acetylcholine(out). The enzyme catalyses thiamine(in) = thiamine(out). It carries out the reaction agmatine(out) = agmatine(in). It catalyses the reaction putrescine(out) = putrescine(in). The catalysed reaction is spermidine(in) = spermidine(out). The enzyme catalyses L-histidyl-L-proline diketopiperazine(in) = L-histidyl-L-proline diketopiperazine(out). It carries out the reaction (R)-salsolinol(in) = (R)-salsolinol(out). It catalyses the reaction prostaglandin F2alpha(out) = prostaglandin F2alpha(in). The catalysed reaction is prostaglandin E2(out) = prostaglandin E2(in). Phosphorylation of the transporter leads to changes in its substrate affinity, resulting in a regulation of the transport activity. In contrast with rat ortholog, ASP uptake is inhibited by protein kinase A (PKA) and C (PKC) activation. ASP uptake is also endogenously activated by calmodulin, the calmodulin-dependent kinase II and LCK tyrosine kinase. Inhibited by cGMP, most likely through a cGMP-binding protein that interacts with OCT1. Electrogenic voltage-dependent transporter that mediates the transport of a variety of organic cations such as endogenous bioactive amines, cationic drugs and xenobiotics. Functions as a pH- and Na(+)-independent, bidirectional transporter. Cation cellular uptake or release is driven by the electrochemical potential (i.e. membrane potential and concentration gradient) and substrate selectivity. Hydrophobicity is a major requirement for recognition in polyvalent substrates and inhibitors. Primarily expressed at the basolateral membrane of hepatocytes and proximal tubules and involved in the uptake and disposition of cationic compounds by hepatic and renal clearance from the blood flow. Most likely functions as an uptake carrier in enterocytes contributing to the intestinal elimination of organic cations from the systemic circulation. Transports endogenous monoamines such as N-1-methylnicotinamide (NMN), guanidine, histamine, neurotransmitters dopamine, serotonin and adrenaline. Also transports natural polyamines such as spermidine, agmatine and putrescine at low affinity, but relatively high turnover. Involved in the hepatic uptake of vitamin B1/thiamine, hence regulating hepatic lipid and energy metabolism. Mediates the bidirectional transport of acetylcholine (ACh) at the apical membrane of ciliated cell in airway epithelium, thereby playing a role in luminal release of ACh from bronchial epithelium. Transports dopaminergic neuromodulators cyclo(his-pro) and salsolinol with lower efficency. Also capable of transporting non-amine endogenous compounds such as prostaglandin E2 (PGE2) and prostaglandin F2-alpha (PGF2-alpha). May contribute to the transport of cationic compounds in testes across the blood-testis-barrier. Also involved in the uptake of xenobiotics tributylmethylammonium (TBuMA), quinidine, N-methyl-quinine (NMQ), N-methyl-quinidine (NMQD) N-(4,4-azo-n-pentyl)-quinuclidine (APQ), azidoprocainamide methoiodide (AMP), N-(4,4-azo-n-pentyl)-21-deoxyajmalinium (APDA) and 4-(4-(dimethylamino)styryl)-N-methylpyridinium (ASP). In terms of biological role, mediates the uptake of 1-methyl-4-phenylpyridinium (MPP(+)). Its function is as follows. Not able to uptake 1-methyl-4-phenylpyridinium (MPP(+)). In Homo sapiens (Human), this protein is Solute carrier family 22 member 1.